The primary structure comprises 218 residues: Ropporin-1-like protein (218 aa).

The RIIa domain occupies 17–46; that stretch reads PELTDILKQFTKAAIRTQPADVLQWSAGYF.

The protein belongs to the ropporin family. Component of the axonemal radial spoke complex 1 (RS1), at least composed of spoke head proteins RSPH1, RSPH3, RSPH9 and the cilia-specific component RSPH4A or sperm-specific component RSPH6A, spoke stalk proteins RSPH14, DNAJB13, DYDC1, ROPN1L and NME5, and the anchor protein IQUB. May interact with AKAP3. Interacts with FSCB; the interaction increases upon spermatozoa capacitation conditions. Interacts with CFAP61. Post-translationally, sumoylated, sumoylation decreases upon spermatozoa capacitation conditions.

The protein resides in the cell projection. It is found in the cilium. The protein localises to the flagellum. In terms of biological role, functions as part of axonemal radial spoke complexes that play an important part in the motility of sperm and cilia. Important for male fertility. With ROPN1, involved in fibrous sheath integrity and sperm motility, plays a role in PKA-dependent signaling processes required for spermatozoa capacitation. The sequence is that of Ropporin-1-like protein (ROPN1L) from Bos taurus (Bovine).